The chain runs to 412 residues: Peptidase T (412 aa).

Residue histidine 84 coordinates Zn(2+). Aspartate 86 is a catalytic residue. Aspartate 146 is a Zn(2+) binding site. Residue glutamate 179 is the Proton acceptor of the active site. Glutamate 180, aspartate 202, and histidine 385 together coordinate Zn(2+).

The protein belongs to the peptidase M20B family. It depends on Zn(2+) as a cofactor.

It localises to the cytoplasm. The enzyme catalyses Release of the N-terminal residue from a tripeptide.. Functionally, cleaves the N-terminal amino acid of tripeptides. The chain is Peptidase T from Haemophilus influenzae (strain 86-028NP).